Consider the following 121-residue polypeptide: Met-lysine-1a (121 aa).

The first 22 residues, Met-1–Ser-22, serve as a signal peptide directing secretion. Positions Asp-23–Arg-69 are excised as a propeptide. Met-120 carries the post-translational modification Methionine amide.

Expressed by the venom gland.

It is found in the secreted. Functionally, shows no antimicrobial activity against Gram-positive bacterium B.subtilis B-501 or Gram-negative bacterium E.coli DH5-alpha at concentrations up to 20 ug/ml. Shows no toxicity towards insect (S.carnaria) larvae. This is Met-lysine-1a from Lachesana tarabaevi (Spider).